A 510-amino-acid chain; its full sequence is NAD(P)H-quinone oxidoreductase subunit 2, chloroplastic (510 aa).

The next 12 membrane-spanning stretches (helical) occupy residues 24–44 (LLLF…GLIL), 59–79 (WFYF…LFRW), 99–119 (IFQF…VEYI), 124–144 (MAIT…MFLC), 149–169 (LITI…LSGY), 183–203 (YLLM…WLYG), 229–249 (ISIA…PAPF), 295–315 (WHLL…LIAI), 323–343 (MLAY…IVGD), 347–367 (GYAS…GTFA), 395–415 (ALSS…AGFF), and 418–438 (LHLF…IGLL).

This sequence belongs to the complex I subunit 2 family. NDH is composed of at least 16 different subunits, 5 of which are encoded in the nucleus.

The protein localises to the plastid. The protein resides in the chloroplast thylakoid membrane. It carries out the reaction a plastoquinone + NADH + (n+1) H(+)(in) = a plastoquinol + NAD(+) + n H(+)(out). The catalysed reaction is a plastoquinone + NADPH + (n+1) H(+)(in) = a plastoquinol + NADP(+) + n H(+)(out). Functionally, NDH shuttles electrons from NAD(P)H:plastoquinone, via FMN and iron-sulfur (Fe-S) centers, to quinones in the photosynthetic chain and possibly in a chloroplast respiratory chain. The immediate electron acceptor for the enzyme in this species is believed to be plastoquinone. Couples the redox reaction to proton translocation, and thus conserves the redox energy in a proton gradient. In Yucca glauca (Soapweed yucca), this protein is NAD(P)H-quinone oxidoreductase subunit 2, chloroplastic.